Reading from the N-terminus, the 889-residue chain is Cytoplasmic aconitate hydratase (889 aa).

Substrate-binding positions include glutamine 86 and 205–207 (DSH). [4Fe-4S] cluster contacts are provided by cysteine 437, cysteine 503, and cysteine 506. Residues arginine 536, arginine 541, arginine 699, and 779–780 (SR) each bind substrate.

It belongs to the aconitase/IPM isomerase family. Requires [4Fe-4S] cluster as cofactor.

Its subcellular location is the cytoplasm. The protein localises to the cytosol. The enzyme catalyses citrate = D-threo-isocitrate. Bifunctional iron sensor that switches between 2 activities depending on iron availability. Iron deprivation, promotes its mRNA binding activity through which it regulates the expression of genes involved in iron uptake, sequestration and utilization. Binds to iron-responsive elements (IRES) in the untranslated region of target mRNAs preventing for instance the translation of ferritin and aminolevulinic acid synthase and stabilizing the transferrin receptor mRNA. In terms of biological role, conversely, when cellular iron levels are high, binds a 4Fe-4S cluster which precludes RNA binding activity and promotes the aconitase activity, the isomerization of citrate to isocitrate via cis-aconitate. This chain is Cytoplasmic aconitate hydratase (ACO1), found in Gallus gallus (Chicken).